Reading from the N-terminus, the 617-residue chain is Proline--tRNA ligase (617 aa).

The protein belongs to the class-II aminoacyl-tRNA synthetase family. ProS type 1 subfamily. In terms of assembly, homodimer.

The protein localises to the cytoplasm. It carries out the reaction tRNA(Pro) + L-proline + ATP = L-prolyl-tRNA(Pro) + AMP + diphosphate. In terms of biological role, catalyzes the attachment of proline to tRNA(Pro) in a two-step reaction: proline is first activated by ATP to form Pro-AMP and then transferred to the acceptor end of tRNA(Pro). As ProRS can inadvertently accommodate and process non-cognate amino acids such as alanine and cysteine, to avoid such errors it has two additional distinct editing activities against alanine. One activity is designated as 'pretransfer' editing and involves the tRNA(Pro)-independent hydrolysis of activated Ala-AMP. The other activity is designated 'posttransfer' editing and involves deacylation of mischarged Ala-tRNA(Pro). The misacylated Cys-tRNA(Pro) is not edited by ProRS. The sequence is that of Proline--tRNA ligase from Streptococcus pneumoniae serotype 19F (strain G54).